Reading from the N-terminus, the 234-residue chain is Sugar fermentation stimulation protein homolog (234 aa).

This sequence belongs to the SfsA family.

The chain is Sugar fermentation stimulation protein homolog from Shewanella pealeana (strain ATCC 700345 / ANG-SQ1).